Reading from the N-terminus, the 480-residue chain is Cytochrome b-c1 complex subunit 1, mitochondrial (480 aa).

A mitochondrion-targeting transit peptide spans 1–34 (MAASVVCRAATAGAQVLLRARRSPALLRTPALRS). 2 positions are modified to N6-acetyllysine: Lys-111 and Lys-138. Position 163 is an N6-acetyllysine; alternate (Lys-163). At Lys-163 the chain carries N6-succinyllysine; alternate. Ser-212 is modified (phosphoserine). N6-acetyllysine is present on Lys-248.

This sequence belongs to the peptidase M16 family. UQCRC1/QCR1 subfamily. In terms of assembly, component of the ubiquinol-cytochrome c oxidoreductase (cytochrome b-c1 complex, complex III, CIII), a multisubunit enzyme composed of 11 subunits. The complex is composed of 3 respiratory subunits cytochrome b, cytochrome c1 and Rieske protein UQCRFS1, 2 core protein subunits UQCRC1/QCR1 and UQCRC2/QCR2, and 6 low-molecular weight protein subunits UQCRH/QCR6, UQCRB/QCR7, UQCRQ/QCR8, UQCR10/QCR9, UQCR11/QCR10 and subunit 9, the cleavage product of Rieske protein UQCRFS1. The complex exists as an obligatory dimer and forms supercomplexes (SCs) in the inner mitochondrial membrane with NADH-ubiquinone oxidoreductase (complex I, CI) and cytochrome c oxidase (complex IV, CIV), resulting in different assemblies (supercomplex SCI(1)III(2)IV(1) and megacomplex MCI(2)III(2)IV(2)). Interacts with UQCC6. Interacts with STMP1. In terms of tissue distribution, expressed in brain, including substantia nigra, striatum, cortex and cerebellum, and in spinal cord, heart, kidney, liver and muscle.

It is found in the mitochondrion inner membrane. Component of the ubiquinol-cytochrome c oxidoreductase, a multisubunit transmembrane complex that is part of the mitochondrial electron transport chain which drives oxidative phosphorylation. The respiratory chain contains 3 multisubunit complexes succinate dehydrogenase (complex II, CII), ubiquinol-cytochrome c oxidoreductase (cytochrome b-c1 complex, complex III, CIII) and cytochrome c oxidase (complex IV, CIV), that cooperate to transfer electrons derived from NADH and succinate to molecular oxygen, creating an electrochemical gradient over the inner membrane that drives transmembrane transport and the ATP synthase. The cytochrome b-c1 complex catalyzes electron transfer from ubiquinol to cytochrome c, linking this redox reaction to translocation of protons across the mitochondrial inner membrane, with protons being carried across the membrane as hydrogens on the quinol. In the process called Q cycle, 2 protons are consumed from the matrix, 4 protons are released into the intermembrane space and 2 electrons are passed to cytochrome c. The 2 core subunits UQCRC1/QCR1 and UQCRC2/QCR2 are homologous to the 2 mitochondrial-processing peptidase (MPP) subunits beta-MPP and alpha-MPP respectively, and they seem to have preserved their MPP processing properties. May be involved in the in situ processing of UQCRFS1 into the mature Rieske protein and its mitochondrial targeting sequence (MTS)/subunit 9 when incorporated into complex III. Seems to play an important role in the maintenance of proper mitochondrial function in nigral dopaminergic neurons. This Homo sapiens (Human) protein is Cytochrome b-c1 complex subunit 1, mitochondrial (UQCRC1).